A 604-amino-acid polypeptide reads, in one-letter code: Aspartate--tRNA(Asp/Asn) ligase (604 aa).

Glu-169 contacts L-aspartate. The aspartate stretch occupies residues Gln-193–Lys-196. Arg-215 contacts L-aspartate. ATP-binding positions include Arg-215–Glu-217 and Gln-224. His-456 contributes to the L-aspartate binding site. Glu-490 provides a ligand contact to ATP. An L-aspartate-binding site is contributed by Arg-497. Gly-542–Arg-545 provides a ligand contact to ATP. A disordered region spans residues Pro-571–Ala-604.

Belongs to the class-II aminoacyl-tRNA synthetase family. Type 1 subfamily. In terms of assembly, homodimer.

Its subcellular location is the cytoplasm. It catalyses the reaction tRNA(Asx) + L-aspartate + ATP = L-aspartyl-tRNA(Asx) + AMP + diphosphate. Functionally, aspartyl-tRNA synthetase with relaxed tRNA specificity since it is able to aspartylate not only its cognate tRNA(Asp) but also tRNA(Asn). Reaction proceeds in two steps: L-aspartate is first activated by ATP to form Asp-AMP and then transferred to the acceptor end of tRNA(Asp/Asn). This chain is Aspartate--tRNA(Asp/Asn) ligase, found in Micrococcus luteus (strain ATCC 4698 / DSM 20030 / JCM 1464 / CCM 169 / CCUG 5858 / IAM 1056 / NBRC 3333 / NCIMB 9278 / NCTC 2665 / VKM Ac-2230) (Micrococcus lysodeikticus).